Here is a 195-residue protein sequence, read N- to C-terminus: Putative L(+)-tartrate dehydratase subunit beta (195 aa).

His36 is a catalytic residue. Residue Lys104 participates in substrate binding.

The protein belongs to the class-I fumarase family. Heterotetramer of two alpha and two beta subunits.

The catalysed reaction is (2R,3R)-tartrate = oxaloacetate + H2O. The sequence is that of Putative L(+)-tartrate dehydratase subunit beta from Methanocaldococcus jannaschii (strain ATCC 43067 / DSM 2661 / JAL-1 / JCM 10045 / NBRC 100440) (Methanococcus jannaschii).